The following is a 96-amino-acid chain: YcgL domain-containing protein VS_0884 (96 aa).

One can recognise a YcgL domain in the interval 1 to 84; the sequence is MLCSIYKSSK…PPVNELELHK (84 aa).

This chain is YcgL domain-containing protein VS_0884, found in Vibrio atlanticus (strain LGP32) (Vibrio splendidus (strain Mel32)).